Reading from the N-terminus, the 586-residue chain is Chaperonin 60 subunit alpha 1, chloroplastic (586 aa).

Residues 1 to 46 (MASANALSSASVLCSSRQSKLGGGNQQQGQRVSYNKRTIRRFSVRA) constitute a chloroplast transit peptide. Ser-90 is subject to Phosphoserine.

It belongs to the chaperonin (HSP60) family. As to quaternary structure, part of the Cpn60 complex composed of 7 alpha and 7 beta subunits. This complex shows ATPase activity. The Cpn60 complex interacts with the Cpn10 complex. Expressed in leaves, stems, siliques and flowers.

The protein resides in the plastid. It localises to the chloroplast. In terms of biological role, binds RuBisCO small and large subunits and is implicated in the assembly of the enzyme oligomer. Involved in protein assisted folding. Required for proper chloroplast development. In Arabidopsis thaliana (Mouse-ear cress), this protein is Chaperonin 60 subunit alpha 1, chloroplastic (CPN60A1).